Consider the following 201-residue polypeptide: 3-isopropylmalate dehydratase small subunit (201 aa).

It belongs to the LeuD family. LeuD type 1 subfamily. Heterodimer of LeuC and LeuD.

The catalysed reaction is (2R,3S)-3-isopropylmalate = (2S)-2-isopropylmalate. It functions in the pathway amino-acid biosynthesis; L-leucine biosynthesis; L-leucine from 3-methyl-2-oxobutanoate: step 2/4. Catalyzes the isomerization between 2-isopropylmalate and 3-isopropylmalate, via the formation of 2-isopropylmaleate. In Shewanella denitrificans (strain OS217 / ATCC BAA-1090 / DSM 15013), this protein is 3-isopropylmalate dehydratase small subunit.